A 277-amino-acid chain; its full sequence is Bifunctional protein FolD (277 aa).

NADP(+) contacts are provided by residues 164–166 (GRS), Ser-189, and Thr-230.

It belongs to the tetrahydrofolate dehydrogenase/cyclohydrolase family. In terms of assembly, homodimer.

The catalysed reaction is (6R)-5,10-methylene-5,6,7,8-tetrahydrofolate + NADP(+) = (6R)-5,10-methenyltetrahydrofolate + NADPH. The enzyme catalyses (6R)-5,10-methenyltetrahydrofolate + H2O = (6R)-10-formyltetrahydrofolate + H(+). It functions in the pathway one-carbon metabolism; tetrahydrofolate interconversion. Its function is as follows. Catalyzes the oxidation of 5,10-methylenetetrahydrofolate to 5,10-methenyltetrahydrofolate and then the hydrolysis of 5,10-methenyltetrahydrofolate to 10-formyltetrahydrofolate. The polypeptide is Bifunctional protein FolD (Clostridium perfringens (strain ATCC 13124 / DSM 756 / JCM 1290 / NCIMB 6125 / NCTC 8237 / Type A)).